A 381-amino-acid chain; its full sequence is MINLRKTHPLLKIINHSFIDLPAPSNISAWWNFGSLLGICLIIQILTGLFLAMHYTSDTLTAFSSVAHICRDVNHGWLLRNLHANGASMFFMCLFLHVGRGIYYGSYLYKETWNIGVILLLTVMATAFVGYVLPWGQMSFWGATVITNLLSTIPYIGTTLAEWIWGGFAVDKATLTRFFAFHFILPFIITALAVVHLLFLHETGSNNPSGINPDSDKIPFHPYYTIKDALGLMLLLLMLLLLALFSPDLLGDPDNFSPANPLNTPPHIKPEWYFLFAYAILRSIPNKLGGVLALLASILILLIIPLLHTANQRSMMFRPISQTLFWILTANLITLTWIGGQPVEQPFIIIGQLAPMLYFLLILVLMPFAGLFENYMLEPEW.

Helical transmembrane passes span 33–53, 77–98, 113–133, and 178–198; these read FGSL…FLAM, WLLR…FLHV, WNIG…GYVL, and FFAF…VHLL. Positions 83 and 97 each coordinate heme b. 2 residues coordinate heme b: H182 and H196. Residue H201 participates in a ubiquinone binding. 4 helical membrane passes run 226–246, 288–308, 320–340, and 347–367; these read IKDA…ALFS, LGGV…PLLH, ISQT…WIGG, and FIII…VLMP.

The protein belongs to the cytochrome b family. The cytochrome bc1 complex contains 11 subunits: 3 respiratory subunits (MT-CYB, CYC1 and UQCRFS1), 2 core proteins (UQCRC1 and UQCRC2) and 6 low-molecular weight proteins (UQCRH/QCR6, UQCRB/QCR7, UQCRQ/QCR8, UQCR10/QCR9, UQCR11/QCR10 and a cleavage product of UQCRFS1). This cytochrome bc1 complex then forms a dimer. It depends on heme b as a cofactor.

Its subcellular location is the mitochondrion inner membrane. Functionally, component of the ubiquinol-cytochrome c reductase complex (complex III or cytochrome b-c1 complex) that is part of the mitochondrial respiratory chain. The b-c1 complex mediates electron transfer from ubiquinol to cytochrome c. Contributes to the generation of a proton gradient across the mitochondrial membrane that is then used for ATP synthesis. The sequence is that of Cytochrome b (MT-CYB) from Pseudantechinus bilarni (Sandstone dibbler).